The primary structure comprises 191 residues: Imidazoleglycerol-phosphate dehydratase (191 aa).

The protein belongs to the imidazoleglycerol-phosphate dehydratase family.

It is found in the cytoplasm. It carries out the reaction D-erythro-1-(imidazol-4-yl)glycerol 3-phosphate = 3-(imidazol-4-yl)-2-oxopropyl phosphate + H2O. It functions in the pathway amino-acid biosynthesis; L-histidine biosynthesis; L-histidine from 5-phospho-alpha-D-ribose 1-diphosphate: step 6/9. The protein is Imidazoleglycerol-phosphate dehydratase of Thermodesulfovibrio yellowstonii (strain ATCC 51303 / DSM 11347 / YP87).